The chain runs to 187 residues: UPF0301 protein YqgE (187 aa).

The protein belongs to the UPF0301 (AlgH) family.

This Salmonella agona (strain SL483) protein is UPF0301 protein YqgE.